The primary structure comprises 2496 residues: Non-reducing polyketide synthase adrD (2496 aa).

The N-terminal acylcarrier protein transacylase domain (SAT) stretch occupies residues 15 to 254 (LVFGPQIAEI…HHASHITAVQ (240 aa)). The 422-residue stretch at 387–808 (ATPIAITGMG…GSNAALVVKQ (422 aa)) folds into the Ketosynthase family 3 (KS3) domain. Catalysis depends on for beta-ketoacyl synthase activity residues Cys-552, His-687, and His-726. Positions 914–1223 (LCFGGQNGNE…QSLDLGGPQG (310 aa)) are malonyl-CoA:ACP transacylase (MAT) domain. Ser-1001 (for acyl/malonyl transferase activity) is an active-site residue. Residues 1295-1423 (KEFVQLLTKQ…GEISLHPFGQ (129 aa)) are N-terminal hotdog fold. One can recognise a PKS/mFAS DH domain in the interval 1295–1602 (KEFVQLLTKQ…FTSVSIAGLA (308 aa)). Residues 1296–1601 (EFVQLLTKQP…EFTSVSIAGL (306 aa)) form a product template (PT) domain region. His-1326 functions as the Proton acceptor; for dehydratase activity in the catalytic mechanism. Residues 1451-1602 (ESSGLKGFAV…FTSVSIAGLA (152 aa)) are C-terminal hotdog fold. Catalysis depends on Asp-1509, which acts as the Proton donor; for dehydratase activity. Residues 1615 to 1629 (EKASPDLSLRNDSKV) are compositionally biased toward basic and acidic residues. Positions 1615–1645 (EKASPDLSLRNDSKVDVNPTPQNTAPVVQPT) are disordered. Positions 1633-1645 (PTPQNTAPVVQPT) are enriched in polar residues. The Carrier domain occupies 1652–1726 (PGYFVVVQEM…ALVQTIFPDA (75 aa)). Ser-1686 carries the O-(pantetheine 4'-phosphoryl)serine modification. Residues 1888-2121 (QHRSEHHLLK…GFQWVDWTHN (234 aa)) form a methyltransferase (CMeT) domain region. The thioesterase (TE) domain stretch occupies residues 2151–2496 (RVMNEETVPY…YEFLRDHVRY (346 aa)). Active-site for thioesterase activity residues include Ser-2274 and Asp-2433.

The catalysed reaction is 3 malonyl-CoA + acetyl-CoA + 2 S-adenosyl-L-methionine = 3,5-dimethylorsellinate + 2 S-adenosyl-L-homocysteine + 3 CO2 + 4 CoA. Its pathway is secondary metabolite biosynthesis; terpenoid biosynthesis. Its function is as follows. Non-reducing polyketide synthase; part of the gene cluster that mediates the biosynthesis of andrastins, meroterpenoid compounds that exhibit inhibitory activity against ras farnesyltransferase, suggesting that they could be promising leads for antitumor agents. The first step of the pathway is the synthesis of 3,5-dimethylorsellinic acid (DMOA) by the polyketide synthase adrD via condensation of one acetyl-CoA starter unit with 3 malonyl-CoA units and 2 methylations. DMAO is then converted to farnesyl-DMAO by the prenyltransferase adrG. The methyltransferase adrK catalyzes the methylation of the carboxyl group of farnesyl-DMAO to farnesyl-DMAO methyl ester which is further converted to epoxyfarnesyl-DMAO methyl ester by the FAD-dependent monooxygenase adrH. The terpene cyclase adrI then catalyzes the carbon skeletal rearrangement to generate the andrastin E, the first compound in the pathway having the andrastin scaffold, with the tetracyclic ring system. The post-cyclization tailoring enzymes adrF, adrE, adrJ, and adrA, are involved in the conversion of andrastin E into andrastin A. The short chain dehydrogenase adrF is responsible for the oxidation of the C-3 a hydroxyl group of andrastin E to yield the corresponding ketone, andrastin D. The ketoreductase adrE stereoselectively reduces the carbonyl moiety to reverse the stereochemistry of the C-3 position to yield andrastin F. The acetyltransferase adrJ is the acetyltransferase that attaches the acetyl group to the C-3 hydroxyl group of andrastin F to yield andrastin C. Finally, the cytochrome P450 monooxygenase adrA catalyzes two sequential oxidation reactions of the C-23 methyl group, to generate the corresponding alcohol andrastin B, and aldehyde andrastin A. This chain is Non-reducing polyketide synthase adrD, found in Penicillium rubens (strain ATCC 28089 / DSM 1075 / NRRL 1951 / Wisconsin 54-1255) (Penicillium chrysogenum).